Reading from the N-terminus, the 526-residue chain is Peptide chain release factor 3 (526 aa).

The tr-type G domain occupies 9 to 277 (DKRRTFAIIS…GIVEWAPKPL (269 aa)). GTP contacts are provided by residues 18–25 (SHPDAGKT), 86–90 (DTPGH), and 140–143 (NKLD).

It belongs to the TRAFAC class translation factor GTPase superfamily. Classic translation factor GTPase family. PrfC subfamily.

It is found in the cytoplasm. Functionally, increases the formation of ribosomal termination complexes and stimulates activities of RF-1 and RF-2. It binds guanine nucleotides and has strong preference for UGA stop codons. It may interact directly with the ribosome. The stimulation of RF-1 and RF-2 is significantly reduced by GTP and GDP, but not by GMP. The sequence is that of Peptide chain release factor 3 from Shewanella baltica (strain OS155 / ATCC BAA-1091).